A 437-amino-acid polypeptide reads, in one-letter code: Eukaryotic peptide chain release factor subunit 1 (437 aa).

The NIKS motif; plays an important role in translational termination motif lies at 61-64; that stretch reads NIKS.

This sequence belongs to the eukaryotic release factor 1 family. In terms of assembly, component of the eRF1-eRF3-GTP ternary complex, composed of ETF1/ERF1 and eRF3 (GSPT1/ERF3A or GSPT2/ERF3B) and GTP.

It localises to the cytoplasm. In terms of biological role, component of the eRF1-eRF3-GTP ternary complex, a ternary complex that mediates translation termination in response to the termination codons. The eRF1-eRF3-GTP complex binds to a stop codon in the ribosomal A-site. ETF1/ERF1 is responsible for stop codon recognition and inducing hydrolysis of peptidyl-tRNA. Following GTP hydrolysis, eRF3 (GSPT1/ERF3A or GSPT2/ERF3B) dissociates, permitting ETF1/eRF1 to accommodate fully in the A-site, followed by hydrolysis of peptidyl-tRNA. The sequence is that of Eukaryotic peptide chain release factor subunit 1 (etf1) from Xenopus tropicalis (Western clawed frog).